The primary structure comprises 304 residues: UDP-N-acetylenolpyruvoylglucosamine reductase (304 aa).

Positions 31-196 (RVGGPAERFY…VAAELELAPG (166 aa)) constitute an FAD-binding PCMH-type domain. The active site involves arginine 176. The Proton donor role is filled by serine 225. Glutamate 295 is a catalytic residue.

This sequence belongs to the MurB family. FAD is required as a cofactor.

The protein resides in the cytoplasm. It catalyses the reaction UDP-N-acetyl-alpha-D-muramate + NADP(+) = UDP-N-acetyl-3-O-(1-carboxyvinyl)-alpha-D-glucosamine + NADPH + H(+). It functions in the pathway cell wall biogenesis; peptidoglycan biosynthesis. Its function is as follows. Cell wall formation. In Methylococcus capsulatus (strain ATCC 33009 / NCIMB 11132 / Bath), this protein is UDP-N-acetylenolpyruvoylglucosamine reductase.